Here is a 277-residue protein sequence, read N- to C-terminus: NLP effector protein Pc109095 (277 aa).

Positions 1–19 (MKFIFAFVLCLAVAQTALG) are cleaved as a signal peptide. A Hepta-peptide GHRHDWE motif motif is present at residues 119 to 125 (RSRHLWA). An N-linked (GlcNAc...) asparagine glycan is attached at asparagine 199.

Belongs to the Necrosis inducing protein (NPP1) family.

Its subcellular location is the secreted. Functionally, secreted effector that contributes strongly to virulence during infection by P.capsici. The chain is NLP effector protein Pc109095 from Phytophthora capsici.